The following is a 90-amino-acid chain: DNA-binding protein HU (90 aa).

It belongs to the bacterial histone-like protein family. In terms of assembly, homodimer.

In terms of biological role, histone-like DNA-binding protein which is capable of wrapping DNA to stabilize it, and thus to prevent its denaturation under extreme environmental conditions. The chain is DNA-binding protein HU (hup) from Staphylococcus aureus (strain COL).